Reading from the N-terminus, the 1212-residue chain is Myosin-1 (1212 aa).

Positions 1 to 35 (MGITRRGKDKAAAGQAVAGGASGGRARPKKATFET) are disordered. Residues 41-715 (VGVSDLTLLS…TLFALEHMRD (675 aa)) form the Myosin motor domain. 134-141 (GESGAGKT) lines the ATP pocket. An actin-binding region spans residues 405–487 (SVGILDIYGF…PGVFSALKDA (83 aa)). IQ domains are found at residues 719–739 (HNMATRIQRMWRAYLAYRAES) and 740–765 (ATRIQTFWRKKRTGAEYLQLRDHGHR). One can recognise a TH1 domain in the interval 773–962 (RRRMSILGSR…AVHTQQGEPP (190 aa)). 2 disordered regions span residues 947–1064 (DFYK…APPA) and 1115–1212 (PAAY…DDDW). The span at 954-966 (VHTQQGEPPNSVS) shows a compositional bias: polar residues. Composition is skewed to low complexity over residues 987–998 (RPGGPNGRPARG) and 1008–1052 (PGGA…ASVR). Residues 1053-1062 (APPPPPPAAP) show a composition bias toward pro residues. Positions 1065–1124 (KAKIMAKVLYDFAGQKENEMSIKEGDLIEIVQKENNGWWLAKSGNQQAWVPAAYVEEQKQ) constitute an SH3 domain. Over residues 1125–1140 (APPPVAASRPPPPAPP) the composition is skewed to pro residues. Over residues 1171–1190 (MSLNGSDGSRSNTPTPSLGN) the composition is skewed to polar residues.

The protein belongs to the TRAFAC class myosin-kinesin ATPase superfamily. Myosin family.

It is found in the cytoplasm. The protein resides in the cytoskeleton. Its subcellular location is the actin patch. Type-I myosin implicated in the organization of the actin cytoskeleton. Required for proper actin cytoskeleton polarization. At the cell cortex, assembles in patch-like structures together with proteins from the actin-polymerizing machinery and promotes actin assembly. Functions as actin nucleation-promoting factor (NPF) for the Arp2/3 complex. This Pyricularia oryzae (strain 70-15 / ATCC MYA-4617 / FGSC 8958) (Rice blast fungus) protein is Myosin-1 (MYO1).